The sequence spans 415 residues: Glucose-1-phosphate adenylyltransferase (415 aa).

Residues Y98, G163, 178-179 (EK), and S189 contribute to the alpha-D-glucose 1-phosphate site.

The protein belongs to the bacterial/plant glucose-1-phosphate adenylyltransferase family. Homotetramer.

The enzyme catalyses alpha-D-glucose 1-phosphate + ATP + H(+) = ADP-alpha-D-glucose + diphosphate. It participates in glycan biosynthesis; glycogen biosynthesis. Involved in the biosynthesis of ADP-glucose, a building block required for the elongation reactions to produce glycogen. Catalyzes the reaction between ATP and alpha-D-glucose 1-phosphate (G1P) to produce pyrophosphate and ADP-Glc. The protein is Glucose-1-phosphate adenylyltransferase of Fervidobacterium nodosum (strain ATCC 35602 / DSM 5306 / Rt17-B1).